The primary structure comprises 258 residues: MLILISPAKTLDYQSPLTTTRYTLPELLDNSQQLIHEARKLTPPQISTLMRISDKLAGINAARFHDWQPDFTPENARQAILAFKGDVYTGLQAETFSEDDFDFAQQHLRMLSGLYGVLRPLDLMQPYRLEMGIRLENTRGKDLYQFWGDIITNKLNEALAAQGDNVVINLASDEYFKSVKPKKLNAEIIKPVFLDEKNGKFKIISFYAKKARGLMSRFIIENRLTKPEQLTGFNSEGYFFDEASSSNGELVFKRYEQR.

The protein belongs to the UPF0246 family.

In Escherichia coli O157:H7 (strain EC4115 / EHEC), this protein is UPF0246 protein YaaA.